Reading from the N-terminus, the 143-residue chain is Large ribosomal subunit protein uL11 (143 aa).

The protein belongs to the universal ribosomal protein uL11 family. Part of the ribosomal stalk of the 50S ribosomal subunit. Interacts with L10 and the large rRNA to form the base of the stalk. L10 forms an elongated spine to which L12 dimers bind in a sequential fashion forming a multimeric L10(L12)X complex. One or more lysine residues are methylated.

Its function is as follows. Forms part of the ribosomal stalk which helps the ribosome interact with GTP-bound translation factors. The sequence is that of Large ribosomal subunit protein uL11 from Azoarcus sp. (strain BH72).